The chain runs to 552 residues: MEIFGKTFREGRFVLKEKNFTVEFAVEKIHLGWKISGRVKGSPGRLEVLRTKAPEKVLVNNWQSWGPCRVVDAFSFKPPEIDPNWRYTASVVPDVLERNLQSDYFVAEEGKVYGFLSSKIAHPFFAVEDGELVAYLEYFDVEFDDFVPLEPLVVLEDPNTPLLLEKYAELVGMENNARVPKHTPTGWCSWYHYFLDLTWEETLKNLKLAKNFPFEVFQIDDAYEKDIGDWLVTRGDFPSVEEMAKVIAENGFIPGIWTAPFSVSETSDVFNEHPDWVVKENGEPKMAYRNWNKKIYALDLSKDEVLNWLFDLFSSLRKMGYRYFKIDFLFAGAVPGERKKNITPIQAFRKGIETIRKAVGEDSFILGCGSPLLPAVGCVDGMRIGPDTAPFWGEHIEDNGAPAARWALRNAITRYFMHDRFWLNDPDCLILREEKTDLTQKEKELYSYTCGVLDNMIIESDDLSLVRDHGKKVLKETLELLGGRPRVQNIMSEDLRYEIVSSGTLSGNVKIVVDLNSREYHLEKEGKSSLKKRVVKREDGRNFYFYEEGERE.

Substrate is bound by residues tryptophan 65, tyrosine 191, 220-221, 325-327, cysteine 368, and arginine 383; these read DD and KID. Aspartate 327 acts as the Nucleophile in catalysis. The active-site Proton donor/acceptor is the aspartate 387.

This sequence belongs to the glycosyl hydrolase 36 family. As to quaternary structure, homodimer.

It catalyses the reaction Hydrolysis of terminal, non-reducing alpha-D-galactose residues in alpha-D-galactosides, including galactose oligosaccharides, galactomannans and galactolipids.. With respect to regulation, inhibited by hydrolysis product alpha-galactopyranose and to a lesser extent by beta-galactopyranose, its mutarotational product. Inhibited by synthetic cyclopropyl carbasugars. In terms of biological role, hydrolyzes the short-chain alpha-galactosaccharides raffinose, melibiose and stachyose. The polypeptide is Alpha-galactosidase (Thermotoga maritima (strain ATCC 43589 / DSM 3109 / JCM 10099 / NBRC 100826 / MSB8)).